Consider the following 1076-residue polypeptide: Nickel-cobalt-cadmium resistance protein NccA (1076 aa).

12 helical membrane-spanning segments follow: residues 14–34, 367–387, 391–411, 419–439, 476–496, 503–523, 562–582, 904–924, 929–949, 960–980, 1004–1024, and 1036–1056; these read WLVL…LNLL, VAKN…ALLG, AAVI…IGMN, LMSL…IIVE, TVYG…FQGV, PMVI…LTFV, MPFL…FTFV, LAII…MAIG, TATV…ALVL, VGFI…ISAI, PVLM…IATG, and VVIG…PAVC.

This sequence belongs to the resistance-nodulation-cell division (RND) (TC 2.A.6) family.

The protein resides in the cell membrane. Component of the NCC cation-efflux system that confers resistance to nickel, cobalt and cadmium. May form a membrane tunnel, which allows ion transport across the membrane. The sequence is that of Nickel-cobalt-cadmium resistance protein NccA (nccA) from Alcaligenes xylosoxydans xylosoxydans (Achromobacter xylosoxidans).